The following is a 433-amino-acid chain: Protein translocase subunit SecD (433 aa).

6 consecutive transmembrane segments (helical) span residues 7 to 27, 257 to 277, 278 to 298, 300 to 320, 354 to 374, and 380 to 400; these read LAFL…GPKI, LIAG…AYRM, AGLI…LTFA, LHVV…GIAV, TIVD…IFGG, and GFAV…VLFA.

This sequence belongs to the SecD/SecF family. SecD subfamily. In terms of assembly, forms a complex with SecF. Part of the essential Sec protein translocation apparatus which comprises SecA, SecYEG and auxiliary proteins SecDF. Other proteins may also be involved.

It localises to the cell membrane. Its function is as follows. Part of the Sec protein translocase complex. Interacts with the SecYEG preprotein conducting channel. SecDF uses the proton motive force (PMF) to complete protein translocation after the ATP-dependent function of SecA. The sequence is that of Protein translocase subunit SecD from Alicyclobacillus acidocaldarius subsp. acidocaldarius (strain ATCC 27009 / DSM 446 / BCRC 14685 / JCM 5260 / KCTC 1825 / NBRC 15652 / NCIMB 11725 / NRRL B-14509 / 104-IA) (Bacillus acidocaldarius).